A 134-amino-acid polypeptide reads, in one-letter code: Peptide methionine sulfoxide reductase MsrB (134 aa).

In terms of domain architecture, MsrB spans 9–131; that stretch reads DEYWRDKLDA…NSASIQLQKE (123 aa). Zn(2+) contacts are provided by cysteine 48, cysteine 51, cysteine 97, and cysteine 100. The active-site Nucleophile is the cysteine 120.

This sequence belongs to the MsrB Met sulfoxide reductase family. The cofactor is Zn(2+).

The enzyme catalyses L-methionyl-[protein] + [thioredoxin]-disulfide + H2O = L-methionyl-(R)-S-oxide-[protein] + [thioredoxin]-dithiol. This is Peptide methionine sulfoxide reductase MsrB from Saccharophagus degradans (strain 2-40 / ATCC 43961 / DSM 17024).